Consider the following 258-residue polypeptide: Transcription cofactor vestigial-like protein 1 (258 aa).

Polar residues-rich tracts occupy residues 55–65 (PQELTPSSQSE) and 74–87 (SMSP…SPWT). The tract at residues 55–93 (PQELTPSSQSEGVMLKNDDSMSPNQWRYSSPWTKPQPEV) is disordered.

The protein belongs to the vestigial family. In terms of assembly, interacts with TEFs.

It is found in the nucleus. Its function is as follows. May act as a specific coactivator for the mammalian TEFs. The polypeptide is Transcription cofactor vestigial-like protein 1 (VGLL1) (Homo sapiens (Human)).